The sequence spans 54 residues: Large ribosomal subunit protein bL33A (54 aa).

The protein belongs to the bacterial ribosomal protein bL33 family.

The protein is Large ribosomal subunit protein bL33A of Streptomyces avermitilis (strain ATCC 31267 / DSM 46492 / JCM 5070 / NBRC 14893 / NCIMB 12804 / NRRL 8165 / MA-4680).